The following is a 1038-amino-acid chain: P3N-PIPO polyprotein (1038 aa).

The region spanning 170–313 (LVAKSDFDDL…AGDVGRTMHY (144 aa)) is the Peptidase S30 domain. Catalysis depends on for P1 proteinase activity residues His-224, Glu-233, and Ser-266. Positions 365 to 368 (KMAC) match the Involved in interaction with stylet and aphid transmission motif. The Involved in virions binding and aphid transmission motif lies at 622–624 (PTK). The Peptidase C6 domain maps to 648 to 770 (MYIAKEGYCY…EGEMKWYRVG (123 aa)). Residues Cys-656 and His-729 each act as for helper component proteinase activity in the active site.

The protein belongs to the potyviridae P3N-PIPO polyprotein family. Interacts (via PIPO domain) with host PCaP1 protein; this interaction may help to anchor the movement complex to the plasma membrane from which the complex could move to the plasmodesmata. In terms of processing, potyviral RNA is expressed as two polyproteins which undergo post-translational proteolytic processing. Genome polyprotein is processed by NIa-pro, P1 and HC-pro proteinases resulting in the production of at least ten individual proteins. P3N-PIPO is cleaved by P1 and HC-pro proteinases resulting in the production of three individual proteins. The P1 proteinase and the HC-pro cleave only their respective C-termini autocatalytically.

The protein resides in the host cell junction. Its subcellular location is the host plasmodesma. It catalyses the reaction Hydrolyzes a Gly-|-Gly bond at its own C-terminus, commonly in the sequence -Tyr-Xaa-Val-Gly-|-Gly, in the processing of the potyviral polyprotein.. Functionally, required for aphid transmission and also has proteolytic activity. Only cleaves a Gly-Gly dipeptide at its own C-terminus. Interacts with virions and aphid stylets. Acts as a suppressor of RNA-mediated gene silencing, also known as post-transcriptional gene silencing (PTGS), a mechanism of plant viral defense that limits the accumulation of viral RNAs. May have RNA-binding activity. In terms of biological role, allows efficient cell to cell propagation, by bypassing the host cell wall barrier. Transports viral genome to neighboring plant cells directly through plasmosdesmata, without any budding. The polypeptide is P3N-PIPO polyprotein (Beet mosaic virus (BtMV)).